We begin with the raw amino-acid sequence, 198 residues long: MPDSALPPCSILILAGGRGQRMGGRDKGLIEWQGLPLIAHLQRLVRPLTDDLIVSCNRNQERYAAYADRLVSDDSLDFPGPLAGIRAGLAVARHPWLLVLPCDAPRIDHALLETLLQAAGRAPARPWMLRCGGQWEPLFSLIPTHLAEEIEHAWRQGDRSPRHVLLPLGAQAIELAAGDPRLANLNTPELLAKHHELK.

Residues 14–16 (LAG), Lys-27, Asp-73, and Asp-103 each bind GTP. Asp-103 lines the Mg(2+) pocket.

It belongs to the MobA family. In terms of assembly, monomer. It depends on Mg(2+) as a cofactor.

The protein localises to the cytoplasm. The enzyme catalyses Mo-molybdopterin + GTP + H(+) = Mo-molybdopterin guanine dinucleotide + diphosphate. Its function is as follows. Transfers a GMP moiety from GTP to Mo-molybdopterin (Mo-MPT) cofactor (Moco or molybdenum cofactor) to form Mo-molybdopterin guanine dinucleotide (Mo-MGD) cofactor. The protein is Molybdenum cofactor guanylyltransferase of Pseudomonas paraeruginosa (strain DSM 24068 / PA7) (Pseudomonas aeruginosa (strain PA7)).